The following is a 298-amino-acid chain: MFSVGKKISFILPIKGVLQKLKDNAQKTVLLDATWYLPTDTKNGKKEYLESRLPGAQYFDIDEAKDHKNPLPHMLPPADEFASYVGKLGIDRNTNVIIYDRKGFFSSPRVFWTFKVFGHEHVFLFPNAFNAWKTEGLELETGEPRTPKPVVYEGAKLNKDLVASFDDIVKVIESPDAAGVHIVDARAHERFLGNVPESRPGLASGHIPTSINIPFTETTAAGITAPKPEEDLEKVFSSHGLTDKSVPIITSCGSGVTASVLFAALKECGFKDVRVYDESWSGYGKRANEDSSLLATGP.

A Rhodanese 1 domain is found at 24 to 141 (NAQKTVLLDA…WKTEGLELET (118 aa)). The segment at 142–175 (GEPRTPKPVVYEGAKLNKDLVASFDDIVKVIESP) is hinge. A Phosphoserine modification is found at Ser164. In terms of domain architecture, Rhodanese 2 spans 176–292 (DAAGVHIVDA…YGKRANEDSS (117 aa)). Arg190 is a substrate binding site. Cys252 (cysteine persulfide intermediate) is an active-site residue.

Its subcellular location is the mitochondrion. It carries out the reaction 2-oxo-3-sulfanylpropanoate + [thioredoxin]-dithiol = [thioredoxin]-disulfide + hydrogen sulfide + pyruvate + H(+). Its function is as follows. Required for formation of the 2-thio group of the 5-methoxycarbonylmethyl-2-thiouridine modified base in some tRNAs. In Schizosaccharomyces pombe (strain 972 / ATCC 24843) (Fission yeast), this protein is Probable 3-mercaptopyruvate sulfurtransferase (tum1).